Here is a 302-residue protein sequence, read N- to C-terminus: Proteasome subunit beta (302 aa).

Residues 1–50 (MTITGSRGFPDGYLAPGSSFLDFAAQHAPTIMPGTQPTFDTIPQDIAPHG) constitute a propeptide, removed in mature form; by autocatalysis. Threonine 51 functions as the Nucleophile in the catalytic mechanism. The tract at residues 277–302 (EPGRDGPGNRLPSQGSATIIPESDQS) is disordered. The segment covering 287 to 302 (LPSQGSATIIPESDQS) has biased composition (polar residues).

The protein belongs to the peptidase T1B family. The 20S proteasome core is composed of 14 alpha and 14 beta subunits that assemble into four stacked heptameric rings, resulting in a barrel-shaped structure. The two inner rings, each composed of seven catalytic beta subunits, are sandwiched by two outer rings, each composed of seven alpha subunits. The catalytic chamber with the active sites is on the inside of the barrel. Has a gated structure, the ends of the cylinder being occluded by the N-termini of the alpha-subunits. Is capped by the proteasome-associated ATPase, ARC.

The protein resides in the cytoplasm. The catalysed reaction is Cleavage of peptide bonds with very broad specificity.. Its pathway is protein degradation; proteasomal Pup-dependent pathway. The formation of the proteasomal ATPase ARC-20S proteasome complex, likely via the docking of the C-termini of ARC into the intersubunit pockets in the alpha-rings, may trigger opening of the gate for substrate entry. Interconversion between the open-gate and close-gate conformations leads to a dynamic regulation of the 20S proteasome proteolysis activity. Functionally, component of the proteasome core, a large protease complex with broad specificity involved in protein degradation. This is Proteasome subunit beta from Jonesia denitrificans (strain ATCC 14870 / DSM 20603 / BCRC 15368 / CIP 55.134 / JCM 11481 / NBRC 15587 / NCTC 10816 / Prevot 55134) (Listeria denitrificans).